The sequence spans 178 residues: ADP-ribosylation factor-like protein 5 (178 aa).

Residue Gly2 is the site of N-myristoyl glycine attachment. GTP contacts are provided by residues 24-31, 67-71, and 126-129; these read GLDNAGKT, DIGGQ, and NKQD.

Belongs to the small GTPase superfamily. Arf family.

Its subcellular location is the golgi apparatus. Functionally, GTP-binding protein that may be involved in protein trafficking; may modulate vesicle budding and uncoating within the Golgi apparatus. Plays a role in the shedding of pathogen spores from intestinal cells. The chain is ADP-ribosylation factor-like protein 5 (arl-5) from Caenorhabditis elegans.